The sequence spans 73 residues: UPF0270 protein PMI2817 (73 aa).

It belongs to the UPF0270 family.

This is UPF0270 protein PMI2817 from Proteus mirabilis (strain HI4320).